We begin with the raw amino-acid sequence, 69 residues long: Rubredoxin-1 (69 aa).

A Rubredoxin-like domain is found at 14 to 69 (QASWMCAECGYIYDPAEGNLETNIRPGMPFDKLPDDWSCPVCNHPKNQFTKFISQL). The Fe cation site is built by Cys19, Cys22, Cys52, and Cys55.

This sequence belongs to the rubredoxin family. As to quaternary structure, monomer. Fe(3+) is required as a cofactor.

Functionally, serves as an electron acceptor for pyruvate ferredoxin oxidoreductase (PFOR). This Chlorobaculum tepidum (strain ATCC 49652 / DSM 12025 / NBRC 103806 / TLS) (Chlorobium tepidum) protein is Rubredoxin-1 (rub1).